A 247-amino-acid polypeptide reads, in one-letter code: 2,3-bisphosphoglycerate-dependent phosphoglycerate mutase (247 aa).

Substrate contacts are provided by residues R8 to N15, T21 to G22, R60, E87 to Y90, K98, R114 to R115, and G183 to N184. Residue H9 is the Tele-phosphohistidine intermediate of the active site. E87 functions as the Proton donor/acceptor in the catalytic mechanism.

It belongs to the phosphoglycerate mutase family. BPG-dependent PGAM subfamily. In terms of assembly, homodimer.

The catalysed reaction is (2R)-2-phosphoglycerate = (2R)-3-phosphoglycerate. The protein operates within carbohydrate degradation; glycolysis; pyruvate from D-glyceraldehyde 3-phosphate: step 3/5. Catalyzes the interconversion of 2-phosphoglycerate and 3-phosphoglycerate. This is 2,3-bisphosphoglycerate-dependent phosphoglycerate mutase from Geobacter sulfurreducens (strain ATCC 51573 / DSM 12127 / PCA).